The primary structure comprises 1071 residues: ATP-dependent helicase/deoxyribonuclease subunit B (1071 aa).

The protein belongs to the helicase family. AddB/RexB type 2 subfamily. In terms of assembly, heterodimer of AddA and RexB. Mg(2+) serves as cofactor.

The heterodimer acts as both an ATP-dependent DNA helicase and an ATP-dependent, dual-direction single-stranded exonuclease. Recognizes the chi site generating a DNA molecule suitable for the initiation of homologous recombination. This subunit has 5' -&gt; 3' nuclease activity but not helicase activity. This is ATP-dependent helicase/deoxyribonuclease subunit B from Streptococcus pyogenes serotype M3 (strain ATCC BAA-595 / MGAS315).